Reading from the N-terminus, the 121-residue chain is Large ribosomal subunit protein uL18 (121 aa).

The protein belongs to the universal ribosomal protein uL18 family. In terms of assembly, part of the 50S ribosomal subunit; part of the 5S rRNA/L5/L18/L25 subcomplex. Contacts the 5S and 23S rRNAs.

In terms of biological role, this is one of the proteins that bind and probably mediate the attachment of the 5S RNA into the large ribosomal subunit, where it forms part of the central protuberance. This Burkholderia ambifaria (strain MC40-6) protein is Large ribosomal subunit protein uL18.